The primary structure comprises 1146 residues: Reverse gyrase 1 (1146 aa).

An RG N-terminal-type zinc finger spans residues Met-1–Arg-38. Zn(2+) contacts are provided by Cys-10, Cys-13, Cys-28, and Cys-31. Residues Gln-79 and Ala-96–Thr-103 contribute to the ATP site. The Helicase ATP-binding domain maps to Ala-83–Glu-240. Residues Asp-197 to Asp-200 carry the DEAD box motif. The Helicase C-terminal domain maps to His-412–Lys-565. The tract at residues Glu-592–Val-1146 is topoisomerase I. One can recognise a Toprim domain in the interval Pro-596–Val-728. Residues Glu-602 and Asp-697 each coordinate Mg(2+). The 399-residue stretch at Asn-744–Glu-1142 folds into the Topo IA-type catalytic domain. Tyr-891 functions as the O-(5'-phospho-DNA)-tyrosine intermediate in the catalytic mechanism.

It in the N-terminal section; belongs to the DEAD box helicase family. DDVD subfamily. In the C-terminal section; belongs to the type IA topoisomerase family. As to quaternary structure, monomer. Zn(2+) is required as a cofactor. It depends on Mg(2+) as a cofactor.

It localises to the cytoplasm. The enzyme catalyses ATP + H2O = ADP + phosphate + H(+). Modifies the topological state of DNA by introducing positive supercoils in an ATP-dependent process, increasing the linking number in steps of +1. Binds to single-stranded DNA, transiently cleaves and then rejoins the ends, introducing a positive supercoil in the process. The scissile phosphodiester is attacked by the catalytic tyrosine of the enzyme, resulting in the formation of a DNA-(5'-phosphotyrosyl)-enzyme intermediate. Probably involved in rewinding DNA strands in regions of the chromosome that have opened up to allow replication, transcription, DNA repair and/or for DNA protection. In Aquifex aeolicus (strain VF5), this protein is Reverse gyrase 1.